The sequence spans 217 residues: Large ribosomal subunit protein uL1 (217 aa).

The residue at position 2 (S2) is an N-acetylserine. A Phosphotyrosine modification is found at Y11. An N6-acetyllysine mark is found at K91 and K106. Position 118 is an N6-acetyllysine; alternate (K118). K118 is covalently cross-linked (Glycyl lysine isopeptide (Lys-Gly) (interchain with G-Cter in SUMO1); alternate). A Glycyl lysine isopeptide (Lys-Gly) (interchain with G-Cter in SUMO2); alternate cross-link involves residue K118.

This sequence belongs to the universal ribosomal protein uL1 family. Component of the large ribosomal subunit.

The protein localises to the cytoplasm. Functionally, component of the large ribosomal subunit. The ribosome is a large ribonucleoprotein complex responsible for the synthesis of proteins in the cell. The chain is Large ribosomal subunit protein uL1 (RPL10A) from Macaca fascicularis (Crab-eating macaque).